Reading from the N-terminus, the 144-residue chain is Vasopressin-neurophysin 2-copeptin (144 aa).

The cysteines at positions 1 and 6 are disulfide-linked. The residue at position 9 (Gly9) is a Glycine amide. Intrachain disulfides connect Cys22/Cys66, Cys25/Cys39, Cys33/Cys56, Cys40/Cys46, Cys73/Cys85, Cys79/Cys97, and Cys86/Cys91. The N-linked (GlcNAc...) asparagine glycan is linked to Asn112.

Belongs to the vasopressin/oxytocin family. Interacts with vasopressin receptors V1bR/AVPR1B (Ki=85 pM), V1aR/AVPR1A (Ki=0.6 nM) and V2R/AVPR2 (Ki=4.9 nM). Interacts with oxytocin receptor (OXTR) (Ki=110 nM).

It is found in the secreted. Its function is as follows. Neurophysin 2 specifically binds vasopressin. In terms of biological role, vasopressin has a direct antidiuretic action on the kidney, it also causes vasoconstriction of the peripheral vessels. Acts by binding to vasopressin receptors (V1bR/AVPR1B, V1aR/AVPR1A, and V2R/AVPR2). The polypeptide is Vasopressin-neurophysin 2-copeptin (AVP) (Cavia porcellus (Guinea pig)).